The chain runs to 533 residues: D-3-phosphoglycerate dehydrogenase (533 aa).

Ala-2 is modified (N-acetylalanine). Ser-14 is subject to Phosphoserine. Lys-21 is subject to N6-acetyllysine; alternate. Residue Lys-21 forms a Glycyl lysine isopeptide (Lys-Gly) (interchain with G-Cter in SUMO1); alternate linkage. Lys-21 participates in a covalent cross-link: Glycyl lysine isopeptide (Lys-Gly) (interchain with G-Cter in SUMO2); alternate. Residue Lys-58 is modified to N6-acetyllysine. NAD(+) is bound by residues Thr-78, 155 to 156 (RI), Asp-175, Thr-207, 234 to 236 (CAR), and Asp-260. Thr-78 is subject to Phosphothreonine. The active site involves Arg-236. The active site involves Glu-265. The Proton donor role is filled by His-283. Residue 283–286 (HLGA) coordinates NAD(+).

Belongs to the D-isomer specific 2-hydroxyacid dehydrogenase family. Homotetramer. As to expression, liver, kidney, brain, testis.

It catalyses the reaction (2R)-3-phosphoglycerate + NAD(+) = 3-phosphooxypyruvate + NADH + H(+). It functions in the pathway amino-acid biosynthesis; L-serine biosynthesis; L-serine from 3-phospho-D-glycerate: step 1/3. Its function is as follows. Catalyzes the reversible oxidation of 3-phospho-D-glycerate to 3-phosphonooxypyruvate, the first step of the phosphorylated L-serine biosynthesis pathway. Does not catalyze the reversible oxidation of 2-hydroxyglutarate to 2-oxoglutarate and the reversible oxidation of (S)-malate to oxaloacetate. The chain is D-3-phosphoglycerate dehydrogenase (Phgdh) from Rattus norvegicus (Rat).